The sequence spans 206 residues: Putative 3-methyladenine DNA glycosylase (206 aa).

Belongs to the DNA glycosylase MPG family.

The chain is Putative 3-methyladenine DNA glycosylase from Rhodopseudomonas palustris (strain ATCC BAA-98 / CGA009).